A 482-amino-acid polypeptide reads, in one-letter code: Glutamate--tRNA ligase 2 (482 aa).

Residues 16-26 (PSPTGYLHLGN) carry the 'HIGH' region motif. Zn(2+) is bound by residues Cys-113, Cys-115, Cys-140, and His-142. A 'KMSKS' region motif is present at residues 257-261 (PLSKR). ATP is bound at residue Lys-260.

Belongs to the class-I aminoacyl-tRNA synthetase family. Glutamate--tRNA ligase type 1 subfamily. Monomer. Zn(2+) is required as a cofactor.

Its subcellular location is the cytoplasm. It catalyses the reaction tRNA(Glu) + L-glutamate + ATP = L-glutamyl-tRNA(Glu) + AMP + diphosphate. Functionally, catalyzes the attachment of glutamate to tRNA(Glu) in a two-step reaction: glutamate is first activated by ATP to form Glu-AMP and then transferred to the acceptor end of tRNA(Glu). This Acidithiobacillus ferrooxidans (strain ATCC 53993 / BNL-5-31) (Leptospirillum ferrooxidans (ATCC 53993)) protein is Glutamate--tRNA ligase 2.